Reading from the N-terminus, the 837-residue chain is Protein kintoun (837 aa).

Disordered stretches follow at residues 100–119 (APSS…GSHW), 205–224 (LPGV…LPDF), 230–249 (YPAA…LQPA), and 363–515 (AAAP…GPGT). Positions 233 to 242 (APGPRAPSPP) are enriched in pro residues. The span at 428 to 442 (GEERVPKPGEQDLSR) shows a compositional bias: basic and acidic residues. The segment covering 445-459 (GSPPGSVEEPSPGGE) has biased composition (low complexity). Residues Ser-461 and Ser-467 each carry the phosphoserine modification. Positions 484–498 (ESARGDSSVETREES) are enriched in basic and acidic residues. Phosphoserine is present on residues Ser-640, Ser-641, and Ser-773.

It belongs to the PIH1 family. Kintoun subfamily. In terms of assembly, interacts with CFAP300. Interacts with DNAAF4. Interacts with DNAAF6/PIH1D3. Interacts with DNAI2 and HSPA1A.

Its subcellular location is the cytoplasm. It is found in the dynein axonemal particle. In terms of biological role, required for cytoplasmic pre-assembly of axonemal dyneins, thereby playing a central role in motility in cilia and flagella. Involved in pre-assembly of dynein arm complexes in the cytoplasm before intraflagellar transport loads them for the ciliary compartment. This chain is Protein kintoun, found in Homo sapiens (Human).